The sequence spans 582 residues: Aspartate--tRNA ligase (582 aa).

Glu-174 provides a ligand contact to L-aspartate. Positions 198-201 are aspartate; that stretch reads QITK. An L-aspartate-binding site is contributed by Arg-220. ATP contacts are provided by residues 220–222 and Gln-229; that span reads RDE. Position 443 (His-443) interacts with L-aspartate. Glu-477 provides a ligand contact to ATP. Arg-484 is a binding site for L-aspartate. An ATP-binding site is contributed by 529-532; it reads GLDR.

This sequence belongs to the class-II aminoacyl-tRNA synthetase family. Type 1 subfamily. In terms of assembly, homodimer.

The protein resides in the cytoplasm. The catalysed reaction is tRNA(Asp) + L-aspartate + ATP = L-aspartyl-tRNA(Asp) + AMP + diphosphate. Its function is as follows. Catalyzes the attachment of L-aspartate to tRNA(Asp) in a two-step reaction: L-aspartate is first activated by ATP to form Asp-AMP and then transferred to the acceptor end of tRNA(Asp). This is Aspartate--tRNA ligase from Streptococcus equi subsp. zooepidemicus (strain MGCS10565).